Consider the following 263-residue polypeptide: Chymotrypsinogen 2 (263 aa).

An N-terminal signal peptide occupies residues methionine 1–glycine 18. Disulfide bonds link cysteine 19/cysteine 140, cysteine 60/cysteine 76, cysteine 154/cysteine 219, cysteine 186/cysteine 200, and cysteine 209/cysteine 238. In terms of domain architecture, Peptidase S1 spans isoleucine 34–glutamine 261. The Charge relay system role is filled by histidine 75. Serine 93 is subject to Phosphoserine. The Charge relay system role is filled by aspartate 120. Serine 213 serves as the catalytic Charge relay system.

The protein belongs to the peptidase S1 family.

The protein localises to the secreted. Its subcellular location is the extracellular space. The catalysed reaction is Preferential cleavage: Tyr-|-Xaa, Trp-|-Xaa, Phe-|-Xaa, Leu-|-Xaa.. The chain is Chymotrypsinogen 2 (CTRB1) from Canis lupus familiaris (Dog).